The following is an 87-amino-acid chain: Large ribosomal subunit protein uL23c (87 aa).

It belongs to the universal ribosomal protein uL23 family. In terms of assembly, part of the 50S ribosomal subunit.

The protein localises to the plastid. It localises to the chloroplast. Binds to 23S rRNA. The protein is Large ribosomal subunit protein uL23c (rpl23) of Bigelowiella natans (Pedinomonas minutissima).